Here is a 575-residue protein sequence, read N- to C-terminus: Proline--tRNA ligase 1 (575 aa).

It belongs to the class-II aminoacyl-tRNA synthetase family. ProS type 1 subfamily. In terms of assembly, homodimer.

It localises to the cytoplasm. The enzyme catalyses tRNA(Pro) + L-proline + ATP = L-prolyl-tRNA(Pro) + AMP + diphosphate. Functionally, catalyzes the attachment of proline to tRNA(Pro) in a two-step reaction: proline is first activated by ATP to form Pro-AMP and then transferred to the acceptor end of tRNA(Pro). As ProRS can inadvertently accommodate and process non-cognate amino acids such as alanine and cysteine, to avoid such errors it has two additional distinct editing activities against alanine. One activity is designated as 'pretransfer' editing and involves the tRNA(Pro)-independent hydrolysis of activated Ala-AMP. The other activity is designated 'posttransfer' editing and involves deacylation of mischarged Ala-tRNA(Pro). The misacylated Cys-tRNA(Pro) is not edited by ProRS. The chain is Proline--tRNA ligase 1 from Anaeromyxobacter dehalogenans (strain 2CP-C).